Consider the following 229-residue polypeptide: C-&gt;U-editing enzyme APOBEC-1 (229 aa).

The 125-residue stretch at 10-134 (VDPTLRRRIE…QRNRQGLRDL (125 aa)) folds into the CMP/dCMP-type deaminase domain. His61 provides a ligand contact to Zn(2+). Glu63 serves as the catalytic Proton donor. 2 residues coordinate Zn(2+): Cys93 and Cys96.

It belongs to the cytidine and deoxycytidylate deaminase family. As to quaternary structure, homodimer. Interacts with A1CF; form an mRNA editing complex. Interacts with RBM47; form an mRNA editing complex. Found in a complex with CELF2/CUGBP2 and A1CF. Interacts with HNRPAB. Interacts with SYNCRIP. It depends on Zn(2+) as a cofactor.

The protein localises to the cytoplasm. Its subcellular location is the nucleus. It catalyses the reaction a cytidine in mRNA + H2O + H(+) = a uridine in mRNA + NH4(+). The enzyme catalyses cytidine(6666) in apoB mRNA + H2O + H(+) = uridine(6666) in apoB mRNA + NH4(+). Cytidine deaminase catalyzing the cytidine to uridine postranscriptional editing of a variety of mRNAs. Form complexes with cofactors that confer differential editing activity and selectivity. Responsible for the postranscriptional editing of a CAA codon for Gln to a UAA codon for stop in the apolipoprotein B mRNA. Also involved in CGA (Arg) to UGA (Stop) editing in the NF1 mRNA. May also play a role in the epigenetic regulation of gene expression by participating in DNA demethylation. The chain is C-&gt;U-editing enzyme APOBEC-1 from Mesocricetus auratus (Golden hamster).